The chain runs to 569 residues: 2-succinyl-5-enolpyruvyl-6-hydroxy-3-cyclohexene-1-carboxylate synthase (569 aa).

Belongs to the TPP enzyme family. MenD subfamily. As to quaternary structure, homodimer. It depends on Mg(2+) as a cofactor. Requires Mn(2+) as cofactor. The cofactor is thiamine diphosphate.

The enzyme catalyses isochorismate + 2-oxoglutarate + H(+) = 5-enolpyruvoyl-6-hydroxy-2-succinyl-cyclohex-3-ene-1-carboxylate + CO2. It participates in quinol/quinone metabolism; 1,4-dihydroxy-2-naphthoate biosynthesis; 1,4-dihydroxy-2-naphthoate from chorismate: step 2/7. It functions in the pathway quinol/quinone metabolism; menaquinone biosynthesis. Functionally, catalyzes the thiamine diphosphate-dependent decarboxylation of 2-oxoglutarate and the subsequent addition of the resulting succinic semialdehyde-thiamine pyrophosphate anion to isochorismate to yield 2-succinyl-5-enolpyruvyl-6-hydroxy-3-cyclohexene-1-carboxylate (SEPHCHC). This Shewanella halifaxensis (strain HAW-EB4) protein is 2-succinyl-5-enolpyruvyl-6-hydroxy-3-cyclohexene-1-carboxylate synthase.